The sequence spans 193 residues: Cilia- and flagella-associated protein 20 (193 aa).

It belongs to the CFAP20 family. As to quaternary structure, microtubule inner protein component of sperm flagellar doublet microtubules.

The protein localises to the nucleus. The protein resides in the cytoplasm. Its subcellular location is the cytoskeleton. It localises to the microtubule organizing center. It is found in the centrosome. The protein localises to the centriole. The protein resides in the cilium basal body. Its subcellular location is the cilium axoneme. It localises to the flagellum axoneme. In terms of biological role, cilium- and flagellum-specific protein that plays a role in axonemal structure organization and motility. Microtubule inner protein (MIP) part of the dynein-decorated doublet microtubules (DMTs) in cilia axoneme, which is required for motile cilia beating. Involved in the regulation of the size and morphology of cilia. Required for axonemal microtubules polyglutamylation. The protein is Cilia- and flagella-associated protein 20 of Homo sapiens (Human).